Here is a 456-residue protein sequence, read N- to C-terminus: MEDLDALLSDLETTTSHMPRSGALKERPPEPLTSPLTQMGPGESSGASGDKDHLYSTVCKPRSPKPAAPATPPFSSSCGVLGTGLCELDRLLQELNATQFNITDEIMSQFPSSKETAGEQKEDQSEDKKRPSPPPSPSPVLPKPSATSATLELDRLMASLSDFRVQNHLPASGPTPPPVPSSMSEDTPSPPGPTSKGSLDTMLGLLQSDLSRRGVPTQAKGLCGSCNKPIAGQVVTALGRAWHPEHFVCGGCSTALGGSSFFEKDGAPFCPECYFERFSPRCGLCNQPIRHKMVTALGTHWHPEHFCCVSCGEPFGDEGFHEREGRPYCRRDFLQLFAPRCQGCQGPILDNYISALSALWHPDCFVCRECFAPFSGGSFFEHEGRPLCENHFHARRGSLCATCGLPVTGRCVSALGRRFHPDHFTCTFCLRPLTKGSFQERAGKPYCQPCFLKLFG.

Met1 carries the N-acetylmethionine modification. A disordered region spans residues 1 to 79 (MEDLDALLSD…ATPPFSSSCG (79 aa)). Residues 1-195 (MEDLDALLSD…DTPSPPGPTS (195 aa)) are transcription activation. The segment at 1–235 (MEDLDALLSD…CNKPIAGQVV (235 aa)) is interaction with PTK2B/PYK2. Residues 3–15 (DLDALLSDLETTT) carry the LD motif 1 motif. Thr33 carries the post-translational modification Phosphothreonine. Tyr55 is subject to Phosphotyrosine. Position 63 is a phosphoserine (Ser63). The interval 78-131 (CGVLGTGLCELDRLLQELNATQFNITDEIMSQFPSSKETAGEQKEDQSEDKKRP) is interaction with PTK2/FAK1. Residues 87-99 (ELDRLLQELNATQ) carry the LD motif 2 motif. The disordered stretch occupies residues 109–146 (QFPSSKETAGEQKEDQSEDKKRPSPPPSPSPVLPKPSA). Residues 116-130 (TAGEQKEDQSEDKKR) show a composition bias toward basic and acidic residues. Ser132, Ser136, Ser138, Ser159, Ser181, and Ser189 each carry phosphoserine. Positions 132-142 (SPPPSPSPVLP) are enriched in pro residues. The LD motif 3 signature appears at 152–163 (ELDRLMASLSDF). The disordered stretch occupies residues 166–200 (QNHLPASGPTPPPVPSSMSEDTPSPPGPTSKGSLD). The short motif at 198–210 (SLDTMLGLLQSDL) is the LD motif 4 element. LIM zinc-binding domains lie at 221–280 (GLCG…RFSP), 281–338 (RCGL…QLFA), 339–398 (PRCQ…RRGS), and 399–456 (LCAT…KLFG). Ser398 is modified (phosphoserine). Thr402 carries the post-translational modification Phosphothreonine.

It belongs to the paxillin family. In terms of assembly, homooligomer. Interacts with CRIP2, HSPB1, ILK, LIMS1, LIMS2, NCK2, NUDT16L1, PAK, PPARG, PTPN12, TCF3, TCF7L2 and VCL. Forms a complex with GIT1 and ARHGEF7. Interacts with AR/androgen receptor in a ligand-dependent manner. Interacts with CSK, LYN, MAPK15, NR3C1, PPARG, PTK2/FAK1, PTK2B/PYK2, SLC6A3, SLC6A4, SMAD3, SRC and talin. Interacts (via LIM zinc-binding domain 2) with CBLC (via RING-type zinc finger); the interaction is direct and enhances CBLC E3 ubiquitin-protein ligase activity. Post-translationally, phosphorylated by gonadotropin-releasing hormone-activated SRC.

The protein localises to the cell junction. It localises to the focal adhesion. The protein resides in the nucleus matrix. It is found in the cytoplasm. Its subcellular location is the cytoskeleton. Functionally, functions as a molecular adapter coordinating multiple protein-protein interactions at the focal adhesion complex and in the nucleus. Links various intracellular signaling modules to plasma membrane receptors and regulates the Wnt and TGFB signaling pathways. May also regulate SLC6A3 and SLC6A4 targeting to the plasma membrane hence regulating their activity. In the nucleus, functions as a nuclear receptor coactivator regulating glucocorticoid, androgen, mineralocorticoid and progesterone receptor transcriptional activity. May play a role in the processes of cell growth, proliferation, migration, differentiation and senescence. May have a zinc-dependent DNA-binding activity. The polypeptide is Transforming growth factor beta-1-induced transcript 1 protein (TGFB1I1) (Bos taurus (Bovine)).